Here is an 84-residue protein sequence, read N- to C-terminus: N.vectensis toxin 5 (84 aa).

The N-terminal stretch at 1-21 is a signal peptide; sequence MNSLLKVAVVCLVMLVACSSG. 3 disulfides stabilise this stretch: C45-C77, C47-C68, and C61-C78.

In terms of tissue distribution, expressed in ectodermal gland cells. In adult female tissues, highly transcribed in mesenteries (gametes-producing tissue) and slightly transcribed in tentacles, pharynx and physa.

Has toxic effects on zebrafish larvae. It causes contractile paralysis and twitching of the tail within 20 minutes, followed by death within 30 minutes. Does not show any toxicity when injected into arthropods (cherry shrimps or grass shrimps). The protein is N.vectensis toxin 5 of Nematostella vectensis (Starlet sea anemone).